The sequence spans 682 residues: Potassium-transporting ATPase ATP-binding subunit (682 aa).

The next 4 membrane-spanning stretches (helical) occupy residues 34–54 (PVMF…IAMA), 62–82 (ALFS…ANFA), 219–239 (IALT…TATL), and 254–274 (VLVA…LSAI). The active-site 4-aspartylphosphate intermediate is the Asp307. Residues Asp344, Glu348, 377 to 384 (FTAQSRMS), and Lys395 contribute to the ATP site. Mg(2+) is bound by residues Asp518 and Asp522. 3 helical membrane passes run 588–608 (FAII…LNIM), 616–636 (AILS…PLAL), and 656–676 (IYGL…DLLL).

This sequence belongs to the cation transport ATPase (P-type) (TC 3.A.3) family. Type IA subfamily. The system is composed of three essential subunits: KdpA, KdpB and KdpC.

The protein localises to the cell inner membrane. The enzyme catalyses K(+)(out) + ATP + H2O = K(+)(in) + ADP + phosphate + H(+). Part of the high-affinity ATP-driven potassium transport (or Kdp) system, which catalyzes the hydrolysis of ATP coupled with the electrogenic transport of potassium into the cytoplasm. This subunit is responsible for energy coupling to the transport system and for the release of the potassium ions to the cytoplasm. This is Potassium-transporting ATPase ATP-binding subunit from Escherichia coli O6:K15:H31 (strain 536 / UPEC).